A 500-amino-acid polypeptide reads, in one-letter code: NAD(P)H-quinone oxidoreductase chain 4, chloroplastic (500 aa).

A run of 14 helical transmembrane segments spans residues 3–23 (FFPW…LIFF), 37–57 (ICIC…HFQL), 87–107 (IGPI…AWPI), 113–130 (LFHF…GSFS), 134–154 (LLLF…LLSM), 167–187 (FILY…GMGL), 208–228 (ALEI…SPII), 242–262 (HYST…YGLV), 272–292 (AHSI…IYAA), 305–325 (IAYS…SITD), 330–350 (GAVL…FLAG), 386–406 (LALP…GIIT), 416–436 (ILIT…SLSM), and 462–482 (LFVS…PDFV).

Belongs to the complex I subunit 4 family.

It is found in the plastid. Its subcellular location is the chloroplast thylakoid membrane. The catalysed reaction is a plastoquinone + NADH + (n+1) H(+)(in) = a plastoquinol + NAD(+) + n H(+)(out). The enzyme catalyses a plastoquinone + NADPH + (n+1) H(+)(in) = a plastoquinol + NADP(+) + n H(+)(out). The polypeptide is NAD(P)H-quinone oxidoreductase chain 4, chloroplastic (Platanus occidentalis (Sycamore)).